The sequence spans 298 residues: Palmitoyl-protein thioesterase 1 (298 aa).

An N-terminal signal peptide occupies residues 1–16; the sequence is MRYFPLLLCLLAITTA. Asparagine 20 carries an N-linked (GlcNAc...) asparagine glycan. Cystine bridges form between cysteine 37–cysteine 38, cysteine 88–cysteine 120, and cysteine 144–cysteine 151. Serine 107 serves as the catalytic Nucleophile. The active site involves aspartate 224. Residue asparagine 250 is glycosylated (N-linked (GlcNAc...) asparagine). Residue histidine 280 is part of the active site.

Belongs to the palmitoyl-protein thioesterase family.

It catalyses the reaction S-hexadecanoyl-L-cysteinyl-[protein] + H2O = L-cysteinyl-[protein] + hexadecanoate + H(+). Its function is as follows. Removes thioester-linked fatty acyl groups such as palmitate (hexadecanoate) from modified cysteine residues in proteins or peptides. The chain is Palmitoyl-protein thioesterase 1 (ppt-1) from Caenorhabditis elegans.